The following is a 45-amino-acid chain: MELMLLFAKLPEAYSIFDPLVDVLPVIPVLFLALAFVWQASVGFR.

Residues 1–8 (MELMLLFA) constitute a propeptide that is removed on maturation. Residues 24-44 (LPVIPVLFLALAFVWQASVGF) traverse the membrane as a helical segment.

The protein belongs to the PsbK family. PSII is composed of 1 copy each of membrane proteins PsbA, PsbB, PsbC, PsbD, PsbE, PsbF, PsbH, PsbI, PsbJ, PsbK, PsbL, PsbM, PsbT, PsbX, PsbY, PsbZ, Psb30/Ycf12, peripheral proteins PsbO, CyanoQ (PsbQ), PsbU, PsbV and a large number of cofactors. It forms dimeric complexes.

The protein resides in the cellular thylakoid membrane. One of the components of the core complex of photosystem II (PSII). PSII is a light-driven water:plastoquinone oxidoreductase that uses light energy to abstract electrons from H(2)O, generating O(2) and a proton gradient subsequently used for ATP formation. It consists of a core antenna complex that captures photons, and an electron transfer chain that converts photonic excitation into a charge separation. The sequence is that of Photosystem II reaction center protein K from Cyanothece sp. (strain PCC 7425 / ATCC 29141).